Here is a 332-residue protein sequence, read N- to C-terminus: NAD-dependent protein deacetylase hst2 (332 aa).

The Deacetylase sirtuin-type domain maps to 7–269 (KHVDSSKHLE…RALCKLLGWS (263 aa)). Residues 35 to 55 (GAGISTAAGIPDFRSPETGIY) and 118 to 121 (QNID) contribute to the NAD(+) site. The active-site Proton acceptor is H138. Positions 146, 149, 170, and 173 each coordinate Zn(2+). NAD(+) contacts are provided by residues 210–212 (GTS), 235–237 (NRE), and C255.

It belongs to the sirtuin family. Class I subfamily. The cofactor is Zn(2+).

The protein resides in the cytoplasm. Its subcellular location is the nucleus. It carries out the reaction N(6)-acetyl-L-lysyl-[protein] + NAD(+) + H2O = 2''-O-acetyl-ADP-D-ribose + nicotinamide + L-lysyl-[protein]. In terms of biological role, NAD-dependent histone deacetylase, which could function in telomeric silencing, cell cycle progression and chromosome stability. In Schizosaccharomyces pombe (strain 972 / ATCC 24843) (Fission yeast), this protein is NAD-dependent protein deacetylase hst2 (hst2).